Reading from the N-terminus, the 195-residue chain is PABIR family member 1 (195 aa).

The protein belongs to the FAM122 family.

In Homo sapiens (Human), this protein is PABIR family member 1.